A 158-amino-acid polypeptide reads, in one-letter code: Ribosome maturation factor RimP (158 aa).

This sequence belongs to the RimP family.

The protein localises to the cytoplasm. Its function is as follows. Required for maturation of 30S ribosomal subunits. This is Ribosome maturation factor RimP from Lactobacillus gasseri (strain ATCC 33323 / DSM 20243 / BCRC 14619 / CIP 102991 / JCM 1131 / KCTC 3163 / NCIMB 11718 / NCTC 13722 / AM63).